We begin with the raw amino-acid sequence, 336 residues long: Dihydroorotate dehydrogenase (quinone) (336 aa).

FMN is bound by residues 62–66 (AGLDK) and threonine 86. Lysine 66 contributes to the substrate binding site. Residue 111-115 (NRMGF) coordinates substrate. FMN is bound by residues asparagine 139 and asparagine 172. Asparagine 172 provides a ligand contact to substrate. Catalysis depends on serine 175, which acts as the Nucleophile. Asparagine 177 serves as a coordination point for substrate. FMN is bound by residues lysine 217 and threonine 245. 246 to 247 (NT) contributes to the substrate binding site. Residues glycine 268, glycine 297, and 318–319 (YS) each bind FMN.

It belongs to the dihydroorotate dehydrogenase family. Type 2 subfamily. In terms of assembly, monomer. It depends on FMN as a cofactor.

It localises to the cell membrane. The catalysed reaction is (S)-dihydroorotate + a quinone = orotate + a quinol. The protein operates within pyrimidine metabolism; UMP biosynthesis via de novo pathway; orotate from (S)-dihydroorotate (quinone route): step 1/1. Its function is as follows. Catalyzes the conversion of dihydroorotate to orotate with quinone as electron acceptor. The sequence is that of Dihydroorotate dehydrogenase (quinone) from Aliivibrio fischeri (strain MJ11) (Vibrio fischeri).